Consider the following 318-residue polypeptide: L-malyl-CoA/beta-methylmalyl-CoA lyase (318 aa).

Residues Phe-19, Arg-24, Lys-30, and Arg-76 each contribute to the substrate site. Residues Glu-141 and Asp-168 each contribute to the Mg(2+) site. Substrate-binding positions include 167-168 and 251-252; these read AD and IH.

It belongs to the HpcH/HpaI aldolase family. In terms of assembly, homohexamer. Dimer of trimers. Requires Mg(2+) as cofactor. Mn(2+) is required as a cofactor.

The catalysed reaction is (S)-malyl-CoA = glyoxylate + acetyl-CoA. It catalyses the reaction (2R,3S)-beta-methylmalyl-CoA = propanoyl-CoA + glyoxylate. Functionally, involved in the ethylmalonyl-CoA pathway for acetate assimilation. Catalyzes the reversible condensation of glyoxylate and acetyl-CoA to L-malyl-CoA and the reversible condensation of glyoxylate and propionyl-CoA to yield beta-methylmalyl-CoA. In Cereibacter sphaeroides (strain ATCC 17029 / ATH 2.4.9) (Rhodobacter sphaeroides), this protein is L-malyl-CoA/beta-methylmalyl-CoA lyase.